The following is a 261-amino-acid chain: Gap junction beta-6 protein (261 aa).

Residues 1 to 22 (MDWGTLHTFIGGVNKHSTSIGK) are Cytoplasmic-facing. The helical transmembrane segment at 23-45 (VWITVIFIFRVMILVVAAQEVWG) threads the bilayer. Residues 46–75 (DEQEDFVCNTLQPGCKNVCYDHFFPVSHIR) are Extracellular-facing. A helical transmembrane segment spans residues 76 to 98 (LWALQLIFVSTPALLVAMHVAYY). At 99–131 (RHETTRKFRRGEKRNDFKDIEDIKKQKVRIEGS) the chain is on the cytoplasmic side. Residues 132–154 (LWWTYTSSIFFRIIFEAAFMYVF) traverse the membrane as a helical segment. Residues 155-192 (YFLYNGYHLPWVLKCGIDPCPNLVDCFISRPTEKTVFT) are Extracellular-facing. Residues 193-215 (IFMISASVICMLLNVAELCYLLL) traverse the membrane as a helical segment. Topologically, residues 216–261 (KVCFRRSKRAQTQKNHPNHALKESKQNEMNELISDSGQNAITGFPS) are cytoplasmic.

It belongs to the connexin family. Beta-type (group I) subfamily. As to quaternary structure, a connexon is composed of a hexamer of connexins. Interacts with CNST.

Its subcellular location is the cell membrane. The protein resides in the cell junction. It is found in the gap junction. Functionally, one gap junction consists of a cluster of closely packed pairs of transmembrane channels, the connexons, through which materials of low MW diffuse from one cell to a neighboring cell. The sequence is that of Gap junction beta-6 protein (GJB6) from Homo sapiens (Human).